We begin with the raw amino-acid sequence, 321 residues long: MLPLPLSILLLLTQSQSFLGEEMDVYSEKTLTDPCTLVVCAPPADSLRGHDGRDGKEGPQGEKGDPGPPGMPGPAGREGPSGRQGSMGPPGTPGPKGEPGPEGGVGAPGMPGSPGPAGLKGERGTPGPGGAIGPQGPSGAMGPPGLKGDRGDPGEKGARGETSVLEVDTLRQRMRNLEGEVQRLQNIVTQYRKAVLFPDGQAVGEKIFKTAGAVKSYSDAEQLCREAKGQLASPRSSAENEAVTQLVRAKNKHAYLSMNDISKEGKFTYPTGGSLDYSNWAPGEPNNRAKDEGPENCLEIYSDGNWNDIECREERLVICEF.

A signal peptide spans 1–20 (MLPLPLSILLLLTQSQSFLG). The disordered stretch occupies residues 43–163 (PADSLRGHDG…GEKGARGETS (121 aa)). Basic and acidic residues predominate over residues 47 to 65 (LRGHDGRDGKEGPQGEKGD). One can recognise a Collagen-like domain in the interval 49-162 (GHDGRDGKEG…PGEKGARGET (114 aa)). Composition is skewed to gly residues over residues 100 to 109 (GPEGGVGAPG) and 124 to 133 (GTPGPGGAIG). Residues 147–159 (KGDRGDPGEKGAR) are compositionally biased toward basic and acidic residues. Residues 222-321 (QLCREAKGQL…REERLVICEF (100 aa)) form the C-type lectin domain. Cystine bridges form between cysteine 224–cysteine 319 and cysteine 297–cysteine 311.

It belongs to the SFTPD family. In terms of assembly, oligomeric complex of 4 set of homotrimers. Hydroxylated. Liver specific.

The protein localises to the secreted. In terms of biological role, lectin that binds to various sugars: mannose = ManNAc &gt; fucose &gt; GlcNAc &gt; glucose = maltose &gt; galactose &gt; lactose &gt; GalNAc. Could play a role in immune defense. The chain is Collectin-43 (CL43) from Bos taurus (Bovine).